The primary structure comprises 366 residues: Septin-1 (366 aa).

The Septin-type G domain maps to 22–295 (KGFDFTLMVA…EGYRARCLQS (274 aa)). Residues 32-39 (GESGLGKS) are G1 motif. GTP is bound by residues 32-39 (GESGLGKS), Thr-66, Gly-92, and 171-179 (KADALLPRE). Residues 89–92 (DTPG) form a G3 motif region. Residues 170-173 (GKAD) are G4 motif. At Ser-206 the chain carries Phosphoserine. Positions 229 and 244 each coordinate GTP. Ser-247 carries the phosphoserine; by AURKB modification. Phosphothreonine is present on Thr-250. 2 positions are modified to phosphoserine; by AURKB: Ser-306 and Ser-314. The disordered stretch occupies residues 347–366 (EKMQAQMQQSQAQGEQSDVL). Over residues 349–366 (MQAQMQQSQAQGEQSDVL) the composition is skewed to low complexity.

The protein belongs to the TRAFAC class TrmE-Era-EngA-EngB-Septin-like GTPase superfamily. Septin GTPase family. In terms of assembly, septins polymerize into heterooligomeric protein complexes that form filaments, and can associate with cellular membranes, actin filaments and microtubules. GTPase activity is required for filament formation. Interacts with AURKB.

The protein localises to the cytoplasm. It is found in the cytoskeleton. The protein resides in the microtubule organizing center. Its subcellular location is the centrosome. It localises to the midbody. Functionally, filament-forming cytoskeletal GTPase. May play a role in cytokinesis (Potential). The sequence is that of Septin-1 from Rattus norvegicus (Rat).